A 105-amino-acid polypeptide reads, in one-letter code: Tyrosine-protein phosphatase 12 (105 aa).

In terms of domain architecture, Tyrosine-protein phosphatase spans 1–105 (WRMIWEKRVE…NLRRIVRTEF (105 aa)). Asp-84 contributes to the substrate binding site.

It belongs to the protein-tyrosine phosphatase family.

The enzyme catalyses O-phospho-L-tyrosyl-[protein] + H2O = L-tyrosyl-[protein] + phosphate. The chain is Tyrosine-protein phosphatase 12 (STY-12) from Styela plicata (Wrinkled sea squirt).